Here is a 356-residue protein sequence, read N- to C-terminus: 3-isopropylmalate dehydrogenase (356 aa).

Substrate is bound by residues Arg-95, Arg-105, Arg-133, and Asp-223. Residues Asp-223, Asp-247, and Asp-251 each contribute to the Mg(2+) site. An NAD(+)-binding site is contributed by 281–293 (GSAPDIAGQNKAN).

The protein belongs to the isocitrate and isopropylmalate dehydrogenases family. LeuB type 1 subfamily. In terms of assembly, homodimer. Mg(2+) serves as cofactor. The cofactor is Mn(2+).

It is found in the cytoplasm. It catalyses the reaction (2R,3S)-3-isopropylmalate + NAD(+) = 4-methyl-2-oxopentanoate + CO2 + NADH. The protein operates within amino-acid biosynthesis; L-leucine biosynthesis; L-leucine from 3-methyl-2-oxobutanoate: step 3/4. Its function is as follows. Catalyzes the oxidation of 3-carboxy-2-hydroxy-4-methylpentanoate (3-isopropylmalate) to 3-carboxy-4-methyl-2-oxopentanoate. The product decarboxylates to 4-methyl-2 oxopentanoate. The chain is 3-isopropylmalate dehydrogenase from Neisseria meningitidis serogroup B (strain ATCC BAA-335 / MC58).